The following is a 225-amino-acid chain: Germin-like protein 3-8 (225 aa).

An N-terminal signal peptide occupies residues 1–25; sequence MSRTSSAPLLVLSAALAVLASTCIA. Cysteines 34 and 57 form a disulfide. Positions 71–219 constitute a Cupin type-1 domain; sequence AGLAVASDTD…SFQVDAKIIK (149 aa). Residue asparagine 86 is glycosylated (N-linked (GlcNAc...) asparagine). The Mn(2+) site is built by histidine 119, histidine 121, glutamate 126, and histidine 165.

This sequence belongs to the germin family. In terms of assembly, oligomer (believed to be a pentamer but probably hexamer).

The protein localises to the secreted. It localises to the extracellular space. It is found in the apoplast. Functionally, may play a role in plant defense. Probably has no oxalate oxidase activity even if the active site is conserved. The sequence is that of Germin-like protein 3-8 from Oryza sativa subsp. japonica (Rice).